Consider the following 70-residue polypeptide: U2-agatoxin-Ao1q (70 aa).

Residues 1–20 form the signal peptide; it reads MRSIISLLLISAMVFSMIAA. The propeptide occupies 21-34; the sequence is VPEEEGLQLSEDER. 2 disulfides stabilise this stretch: C44/C58 and C52/C68. The residue at position 69 (L69) is a Leucine amide.

This sequence belongs to the neurotoxin 01 (U2-agtx) family. Does not contain a cysteine at position 53 which disrupts the cysteine framework. In terms of tissue distribution, expressed by the venom gland.

The protein resides in the secreted. Its function is as follows. Insect active toxin causing rapid but reversible paralysis in crickets. No activity shown in mammals. Does not show effect on mammalian voltage-gated calcium channels. In Agelena orientalis (Funnel-web spider), this protein is U2-agatoxin-Ao1q.